Reading from the N-terminus, the 199-residue chain is Glycerol-3-phosphate acyltransferase (199 aa).

Transmembrane regions (helical) follow at residues isoleucine 3–valine 23, valine 55–isoleucine 75, phenylalanine 79–leucine 99, valine 113–phenylalanine 133, and tyrosine 155–isoleucine 175.

It belongs to the PlsY family. In terms of assembly, probably interacts with PlsX.

It localises to the cell inner membrane. The enzyme catalyses an acyl phosphate + sn-glycerol 3-phosphate = a 1-acyl-sn-glycero-3-phosphate + phosphate. It participates in lipid metabolism; phospholipid metabolism. Functionally, catalyzes the transfer of an acyl group from acyl-phosphate (acyl-PO(4)) to glycerol-3-phosphate (G3P) to form lysophosphatidic acid (LPA). This enzyme utilizes acyl-phosphate as fatty acyl donor, but not acyl-CoA or acyl-ACP. The sequence is that of Glycerol-3-phosphate acyltransferase from Endomicrobium trichonymphae.